Here is a 92-residue protein sequence, read N- to C-terminus: Small ribosomal subunit protein uS19 (92 aa).

Belongs to the universal ribosomal protein uS19 family.

In terms of biological role, protein S19 forms a complex with S13 that binds strongly to the 16S ribosomal RNA. The protein is Small ribosomal subunit protein uS19 of Rhizobium rhizogenes (strain K84 / ATCC BAA-868) (Agrobacterium radiobacter).